We begin with the raw amino-acid sequence, 341 residues long: Probable alcohol acetyltransferase (341 aa).

The N-terminal 40 residues, 1-40 (MFASRILRNSAQTLKTELPHKETIKMAYDLHKPRSTAIRH), are a transit peptide targeting the mitochondrion. An AB hydrolase-1 domain is found at 48–301 (PILFLHGIFG…NSNHDILDQR (254 aa)). Catalysis depends on charge relay system residues Ser121, Asp145, and His295.

It belongs to the AB hydrolase superfamily.

The protein localises to the mitochondrion. Functionally, probable alcohol acetyltransferase that uses acetyl-CoA to synthesize acetate esters from various alcohols. Not involved in the synthesis of ethyl acetate. The polypeptide is Probable alcohol acetyltransferase (EAT2) (Wickerhamomyces anomalus (strain ATCC 58044 / CBS 1984 / NCYC 433 / NRRL Y-366-8) (Yeast)).